The primary structure comprises 107 residues: Small ribosomal subunit protein uS10c (107 aa).

This sequence belongs to the universal ribosomal protein uS10 family. As to quaternary structure, part of the 30S ribosomal subunit.

The protein resides in the plastid. It is found in the chloroplast. Its function is as follows. Involved in the binding of tRNA to the ribosomes. The polypeptide is Small ribosomal subunit protein uS10c (Thalassiosira pseudonana (Marine diatom)).